The following is a 171-amino-acid chain: MTKFNFDQVHSDIQFKIKHLMVSQVKGTFKQFDVQLDGDINDLTSLKATATIIPSSIDTQNEDRDNHLRSNDFFGTEDNDKMTFVTKEINENQVVGDLTIKGETHEETFDVEFNGVSKNPMNGQQVTGFIVSGTINREKYGINFNQALETGGVMLGKNVKFEASAEFSIDN.

This sequence belongs to the UPF0312 family.

This is UPF0312 protein SE_0264 from Staphylococcus epidermidis (strain ATCC 12228 / FDA PCI 1200).